The chain runs to 317 residues: 3',5'-bisphosphate nucleotidase (317 aa).

Asp-46 functions as the Proton acceptor in the catalytic mechanism. Residues Glu-69, Asp-118, Ile-120, and Asp-121 each contribute to the Mg(2+) site. Residue Thr-123 is the Proton acceptor of the active site. An adenosine 3',5'-bisphosphate-binding site is contributed by Thr-123. AMP is bound by residues Ser-198, His-203, Ser-227, Lys-230, Arg-244, Tyr-251, and Asp-257. Adenosine 3',5'-bisphosphate-binding residues include His-203, Ser-227, Lys-230, and Arg-244. Asp-257 is a binding site for Mg(2+). Asp-257 is a binding site for adenosine 3',5'-bisphosphate.

This sequence belongs to the inositol monophosphatase superfamily. As to quaternary structure, monomer. Mg(2+) is required as a cofactor.

Its subcellular location is the cytoplasm. The enzyme catalyses adenosine 3',5'-bisphosphate + H2O = AMP + phosphate. It carries out the reaction 1D-myo-inositol 1,4-bisphosphate + H2O = 1D-myo-inositol 4-phosphate + phosphate. Inhibited by Li(2+). In terms of biological role, phosphatase that converts 3'-phosphoadenosine 5'-phosphate (PAP) to AMP. Is also able to hydrolyze inositol 1,4-bisphosphate but with less efficiency. This is 3',5'-bisphosphate nucleotidase from Entamoeba histolytica (strain ATCC 30459 / HM-1:IMSS / ABRM).